A 365-amino-acid polypeptide reads, in one-letter code: Inositol 4-methyltransferase (365 aa).

Aspartate 232 provides a ligand contact to S-adenosyl-L-methionine. Histidine 270 serves as the catalytic Proton acceptor.

Belongs to the class I-like SAM-binding methyltransferase superfamily. Cation-independent O-methyltransferase family. Leaves and roots. The levels found in the leaves are 25 times greater than in the roots.

The catalysed reaction is myo-inositol + S-adenosyl-L-methionine = 1D-4-O-methyl-myo-inositol + S-adenosyl-L-homocysteine + H(+). It functions in the pathway polyol metabolism; myo-inositol metabolism. In terms of biological role, catalyzes the methylation of myo-inositol into ononitol (1D-4-O-methyl myo-inositol), the first step in the biosynthesis of the cyclic sugar pinitol which has osmoprotective properties. The sequence is that of Inositol 4-methyltransferase (IMT1) from Mesembryanthemum crystallinum (Common ice plant).